Here is a 215-residue protein sequence, read N- to C-terminus: UPF0502 protein YceH (215 aa).

Lys80 carries the N6-acetyllysine modification.

This sequence belongs to the UPF0502 family.

The chain is UPF0502 protein YceH from Escherichia fergusonii (strain ATCC 35469 / DSM 13698 / CCUG 18766 / IAM 14443 / JCM 21226 / LMG 7866 / NBRC 102419 / NCTC 12128 / CDC 0568-73).